The sequence spans 435 residues: Serine hydroxymethyltransferase (435 aa).

(6S)-5,6,7,8-tetrahydrofolate is bound by residues L131 and 135 to 137 (GHL). K240 carries the N6-(pyridoxal phosphate)lysine modification.

It belongs to the SHMT family. Homodimer. Pyridoxal 5'-phosphate serves as cofactor.

Its subcellular location is the cytoplasm. It carries out the reaction (6R)-5,10-methylene-5,6,7,8-tetrahydrofolate + glycine + H2O = (6S)-5,6,7,8-tetrahydrofolate + L-serine. Its pathway is one-carbon metabolism; tetrahydrofolate interconversion. It participates in amino-acid biosynthesis; glycine biosynthesis; glycine from L-serine: step 1/1. In terms of biological role, catalyzes the reversible interconversion of serine and glycine with tetrahydrofolate (THF) serving as the one-carbon carrier. This reaction serves as the major source of one-carbon groups required for the biosynthesis of purines, thymidylate, methionine, and other important biomolecules. Also exhibits THF-independent aldolase activity toward beta-hydroxyamino acids, producing glycine and aldehydes, via a retro-aldol mechanism. In Bifidobacterium longum subsp. infantis (strain ATCC 15697 / DSM 20088 / JCM 1222 / NCTC 11817 / S12), this protein is Serine hydroxymethyltransferase.